The sequence spans 612 residues: Bifunctional lycopene cyclase/phytoene synthase (612 aa).

The tract at residues 1–268 is lycopene beta-cyclase; sequence MGWEYAQVHL…IVFGLIACDN (268 aa). 7 helical membrane-spanning segments follow: residues 3–23, 31–51, 112–130, 148–168, 171–191, 203–223, and 246–266; these read WEYA…LAAV, LDVF…VKGL, LFFF…MILS, IAGQ…VSSG, GMYM…LWSI, NTAL…TFAL, and IEEA…LIAC. Positions 275-612 are phytoene synthase; the sequence is TFPEHFPRTK…IRVAWSALNK (338 aa).

This sequence in the N-terminal section; belongs to the lycopene beta-cyclase family. In the C-terminal section; belongs to the phytoene/squalene synthase family.

The protein resides in the membrane. The enzyme catalyses all-trans-lycopene = gamma-carotene. The catalysed reaction is gamma-carotene = all-trans-beta-carotene. It carries out the reaction 2 (2E,6E,10E)-geranylgeranyl diphosphate = 15-cis-phytoene + 2 diphosphate. It participates in carotenoid biosynthesis; beta-carotene biosynthesis. It functions in the pathway carotenoid biosynthesis; phytoene biosynthesis; all-trans-phytoene from geranylgeranyl diphosphate: step 1/1. In terms of biological role, bifunctional enzyme; part of the car gene cluster that mediates the biosynthesis of neurosporaxanthin, a carboxylic apocarotenoid acting as an essential protective pigments and leading to orange pigmentation. CarAR catalyzes the first step of the pathway by converting geranylgeranyl diphosphate to phytoene, as well as the later cyclization step that transforms the carB product lycopene into gamma-carotene. CarAR also converts part of gamma-carotene into beta-carotene. Neurosporaxanthin is synthesized from geranyl-geranyl pyrophosphate (GGPP) through several enzymatic activities. Phytoene synthase activity performed by the bifunctional enzyme carAR first produces phytoene from geranyl-geranyl pyrophosphate (GGPP). The phytoene dehydrogenase carB then introduces 4 desaturations to lead to lycopene which is substrate of the carotene cyclase activity of carAR that leads to the production of gamma-carotene. CarB then performs a 5th desaturation reaction to yield torulene. Torulene is the substrate of the dioxidase carT that breaks the molecule, removing five carbon atoms to yield beta-apo-4'-carotenal, whereas the aldehyde dehydrogenase carD mediates the last step by converting beta-apo-4'-carotenal into neurosporaxanthin. The sequence is that of Bifunctional lycopene cyclase/phytoene synthase from Fusarium fujikuroi (Bakanae and foot rot disease fungus).